The following is a 1097-amino-acid chain: Importin-5 (1097 aa).

At alanine 2 the chain carries N-acetylalanine. 24 HEAT repeats span residues 5 to 38 (AAEQ…NIPG), 43 to 77 (TFLL…FDEV), 95 to 122 (MIIQ…NLID), 130 to 157 (PEGL…IFWN), 167 to 201 (QHYL…AAFI), 210 to 246 (LFKH…IADT), 254 to 289 (HLEA…LSET), 298 to 350 (TNIV…ACGL), 352 to 386 (GKLV…SAIG), 390 to 430 (HQQM…ATDF), 432 to 472 (PGFQ…FTED), 475 to 523 (KSLL…ADTA), 525 to 568 (EKFV…GLAV), 570 to 615 (KEKF…CKIL), 617 to 692 (KEFQ…AKEL), 695 to 737 (GFVE…ARVR), 741 to 780 (YLTQ…IEVM), 787 to 853 (NEHF…FSSY), 856 to 895 (KVLP…IEHC), 903 to 935 (AEYF…MAQY), 943 to 983 (FCTE…MKFK), 990 to 1021 (EEVL…DLIE), 1032 to 1067 (NTNL…VVRQ), and 1070 to 1093 (TSGG…IQEL). The region spanning 28-99 (QAEETYENIP…KSELLMIIQM (72 aa)) is the Importin N-terminal domain. The tract at residues 325–375 (DELEDDDFDSNAVAGESALDRMACGLGGKLVLPMIKEHIMQMLQNPDWKYR) is ran-GTP binding. Serine 827 carries the phosphoserine modification.

The protein belongs to the importin beta family. Importin beta-3 subfamily. In terms of assembly, interacts with RPS7 and RPL5. Interacts with RPL23A (via BIB domain). Interacts with H2A, H2B, H3 and H4 histones. Interacts with CPEB3; this mediates CPEB3 nuclear import following neuronal stimulation which enhances the interaction in a RAN-regulated manner. Interacts with AIFM2; this interaction likely mediates the translocation of AIFM2 into the nucleus upon oxidative stress. Interacts with STX3 (isoform 3). Interacts with SRP19. As to quaternary structure, (Microbial infection) Interacts with HIV-1 Rev.

The protein resides in the cytoplasm. The protein localises to the nucleus. Its subcellular location is the nucleolus. In terms of biological role, functions in nuclear protein import as nuclear transport receptor. Serves as receptor for nuclear localization signals (NLS) in cargo substrates. Is thought to mediate docking of the importin/substrate complex to the nuclear pore complex (NPC) through binding to nucleoporin and the complex is subsequently translocated through the pore by an energy requiring, Ran-dependent mechanism. At the nucleoplasmic side of the NPC, Ran binds to the importin, the importin/substrate complex dissociates and importin is re-exported from the nucleus to the cytoplasm where GTP hydrolysis releases Ran. The directionality of nuclear import is thought to be conferred by an asymmetric distribution of the GTP- and GDP-bound forms of Ran between the cytoplasm and nucleus. Mediates the nuclear import of ribosomal proteins RPL23A, RPS7 and RPL5. In vitro, mediates nuclear import of H2A, H2B, H3 and H4 histones. Binds to CPEB3 and mediates its nuclear import following neuronal stimulation. In case of HIV-1 infection, binds and mediates the nuclear import of HIV-1 Rev. This Homo sapiens (Human) protein is Importin-5 (IPO5).